The primary structure comprises 479 residues: PRAME family member 18 (479 aa).

The LRR 1 repeat unit spans residues glutamine 15–proline 38. One copy of the LRR 1; degenerate repeat lies at arginine 97–cysteine 124. An LRR 2; degenerate repeat occupies histidine 179–tyrosine 203. An LRR 3; degenerate repeat occupies proline 204 to glutamine 230. The LRR 4; degenerate repeat unit spans residues methionine 231–arginine 265. LRR repeat units follow at residues leucine 266–leucine 291, arginine 292–lysine 323, glutamine 324–alanine 342, alanine 348–arginine 375, and cysteine 376–histidine 400.

It belongs to the PRAME family.

This chain is PRAME family member 18, found in Homo sapiens (Human).